The primary structure comprises 372 residues: Putative glutamate--cysteine ligase 2 (372 aa).

Belongs to the glutamate--cysteine ligase type 2 family. YbdK subfamily. Homodimer.

The enzyme catalyses L-cysteine + L-glutamate + ATP = gamma-L-glutamyl-L-cysteine + ADP + phosphate + H(+). Functionally, ATP-dependent carboxylate-amine ligase which exhibits weak glutamate--cysteine ligase activity. This chain is Putative glutamate--cysteine ligase 2 (ybdK), found in Escherichia coli O1:K1 / APEC.